The sequence spans 98 residues: UPF0235 protein Ping_3043 (98 aa).

It belongs to the UPF0235 family.

This Psychromonas ingrahamii (strain DSM 17664 / CCUG 51855 / 37) protein is UPF0235 protein Ping_3043.